The chain runs to 377 residues: Succinyl-diaminopimelate desuccinylase (377 aa).

His66 is a Zn(2+) binding site. The active site involves Asp68. Asp99 is a binding site for Zn(2+). Residue Glu133 is the Proton acceptor of the active site. The Zn(2+) site is built by Glu134, Glu163, and His349.

It belongs to the peptidase M20A family. DapE subfamily. In terms of assembly, homodimer. Zn(2+) is required as a cofactor. The cofactor is Co(2+).

The enzyme catalyses N-succinyl-(2S,6S)-2,6-diaminopimelate + H2O = (2S,6S)-2,6-diaminopimelate + succinate. The protein operates within amino-acid biosynthesis; L-lysine biosynthesis via DAP pathway; LL-2,6-diaminopimelate from (S)-tetrahydrodipicolinate (succinylase route): step 3/3. Catalyzes the hydrolysis of N-succinyl-L,L-diaminopimelic acid (SDAP), forming succinate and LL-2,6-diaminopimelate (DAP), an intermediate involved in the bacterial biosynthesis of lysine and meso-diaminopimelic acid, an essential component of bacterial cell walls. This is Succinyl-diaminopimelate desuccinylase from Legionella pneumophila (strain Paris).